The following is a 344-amino-acid chain: Phenylalanine--tRNA ligase alpha subunit (344 aa).

Residue glutamate 256 participates in Mg(2+) binding.

The protein belongs to the class-II aminoacyl-tRNA synthetase family. Phe-tRNA synthetase alpha subunit type 1 subfamily. In terms of assembly, tetramer of two alpha and two beta subunits. Mg(2+) is required as a cofactor.

It is found in the cytoplasm. The enzyme catalyses tRNA(Phe) + L-phenylalanine + ATP = L-phenylalanyl-tRNA(Phe) + AMP + diphosphate + H(+). The protein is Phenylalanine--tRNA ligase alpha subunit of Oceanobacillus iheyensis (strain DSM 14371 / CIP 107618 / JCM 11309 / KCTC 3954 / HTE831).